Reading from the N-terminus, the 488-residue chain is Mannitol 2-dehydrogenase (488 aa).

37-48 (IVHVGVGGFHRA) contacts NAD(+).

It belongs to the mannitol dehydrogenase family. In terms of assembly, monomer.

The enzyme catalyses D-mannitol + NAD(+) = D-fructose + NADH + H(+). Its function is as follows. Catalyzes the NAD(H)-dependent interconversion of D-fructose and D-mannitol in the mannitol metabolic pathway. The protein is Mannitol 2-dehydrogenase of Aspergillus niger (strain ATCC MYA-4892 / CBS 513.88 / FGSC A1513).